Here is a 166-residue protein sequence, read N- to C-terminus: Lipoprotein signal peptidase (166 aa).

A run of 3 helical transmembrane segments spans residues 10–30, 68–88, and 94–114; these read LIWL…KAWV, WQLW…AFWL, and GHWR…GNVI. Active-site residues include D124 and D142. The chain crosses the membrane as a helical span at residues 138–158; sequence FNIADSAIVGGAIGIAVFGLF.

This sequence belongs to the peptidase A8 family.

Its subcellular location is the cell inner membrane. It catalyses the reaction Release of signal peptides from bacterial membrane prolipoproteins. Hydrolyzes -Xaa-Yaa-Zaa-|-(S,diacylglyceryl)Cys-, in which Xaa is hydrophobic (preferably Leu), and Yaa (Ala or Ser) and Zaa (Gly or Ala) have small, neutral side chains.. It participates in protein modification; lipoprotein biosynthesis (signal peptide cleavage). This protein specifically catalyzes the removal of signal peptides from prolipoproteins. The polypeptide is Lipoprotein signal peptidase (Xanthomonas oryzae pv. oryzae (strain MAFF 311018)).